The following is a 504-amino-acid chain: Endosomal/lysosomal proton channel TMEM175 (504 aa).

Residues 1–27 are disordered; it reads MSQPRTPEQALDTPGDCPPGRRDEDAG. Over 1–33 the chain is Cytoplasmic; sequence MSQPRTPEQALDTPGDCPPGRRDEDAGEGIQCS. Phosphothreonine is present on threonine 6. Residues 34–56 form a helical membrane-spanning segment; that stretch reads QRMLSFSDALLSIIATVMILPVT. The RxxxFSD motif 1 motif lies at 35–41; sequence RMLSFSD. At 57–77 the chain is on the lumenal side; it reads HTEISPEQQFDRSVQRLLATR. The interval 58–63 is short helix H1-1; sequence TEISPE. Residues 65–71 form a short helix H2-1 region; sequence QFDRSVQ. Residues 78 to 100 form a helical membrane-spanning segment; sequence IAVYLMTFLIVTVAWAAHTRLFQ. At 101–106 the chain is on the cytoplasmic side; the sequence is VVGKTD. A helical transmembrane segment spans residues 107-128; that stretch reads DTLALLNLACMMTITFLPYTFS. Over 129-138 the chain is Lumenal; the sequence is LMVTFPDVPL. Residues 139 to 160 form a helical membrane-spanning segment; the sequence is GIFLFCVCVIAIGVVQALIVGY. Residues 161-184 lie on the Cytoplasmic side of the membrane; it reads AFHFPHLLSPQIQRSAHRALYRRH. Residues 185–205 form a helical membrane-spanning segment; it reads VLGIVLQGPALCFAAAIFSLF. Residues 206–210 are Lumenal-facing; the sequence is FVPLS. Residues 211 to 230 traverse the membrane as a helical segment; that stretch reads YLLMVTVILLPYVSKVTGWC. Residues 231–257 are Cytoplasmic-facing; that stretch reads RDRLLGHREPSAHPVEVFSFDLHEPLS. The chain crosses the membrane as a helical span at residues 258–282; that stretch reads KERVEAFSDGVYAIVATLLILDICE. The RxxxFSD motif 2 motif lies at 260–266; it reads RVEAFSD. Residues 283–309 lie on the Lumenal side of the membrane; that stretch reads DNVPDPKDVKERFSGSLVAALSATGPR. The segment at 288–296 is short helix H1-2; that stretch reads PKDVKERFS. Positions 298-304 are short helix H2-2; the sequence is SLVAALS. A helical membrane pass occupies residues 310–332; that stretch reads FLAYFGSFATVGLLWFAHHSLFL. Topologically, residues 333–338 are cytoplasmic; it reads HVRKAT. A helical transmembrane segment spans residues 339–360; sequence RAMGLLNTLSLAFVGGLPLAYQ. The Lumenal segment spans residues 361-375; sequence QTSAFARQPRDELER. A helical transmembrane segment spans residues 376-396; sequence VRVSCTIIFLASIFQLAMWTT. Topologically, residues 397–416 are cytoplasmic; sequence ALLHQAETLQPSVWFGGREH. Residues 417–440 traverse the membrane as a helical segment; the sequence is VLMFAKLALYPCASLLAFASTCLL. Residues 441–442 lie on the Lumenal side of the membrane; sequence SR. A helical membrane pass occupies residues 443–469; sequence FSVGIFHLMQIAVPCAFLLLRLLVGLA. The Cytoplasmic portion of the chain corresponds to 470 to 504; it reads LATLRVLRGLARPEHPPPAPTGQDDPQSQLLPAPC. Residues 483–504 are disordered; that stretch reads EHPPPAPTGQDDPQSQLLPAPC. Polar residues predominate over residues 493 to 504; that stretch reads DDPQSQLLPAPC.

Belongs to the TMEM175 family. As to quaternary structure, homodimer. Interacts with AKT (AKT1, AKT2 or AKT3); leading to formation of the lysoK(GF) complex, which activates the channel. Interacts with LAMP1; inhibiting the proton channel activity of TMEM175. Interacts with LAMP2; inhibiting the proton channel activity of TMEM175. As to expression, widely expressed.

The protein resides in the endosome membrane. Its subcellular location is the lysosome membrane. It carries out the reaction H(+)(in) = H(+)(out). The enzyme catalyses K(+)(in) = K(+)(out). Its activity is regulated as follows. Active at low pH (under pH 4.6): proton channel activity is activated by luminal side protons. Polyunsaturated fatty acids, such as arachidonic acid, also activate the channel activity. Proton channel activity is directly inhibited by LAMP1 or LAMP2, facilitating lysosomal acidification. Channel activity is activated following interaction with AKT (AKT1, AKT2 or AKT3): interaction promotes activation from closed to an open state. Activation by AKT is independent of AKT serine/threonine-protein kinase activity. Its function is as follows. Proton-activated proton channel that catalyzes proton efflux from endosomes and lysosomes to maintain a steady-state pH. Activated at low pH (under pH 4.6) by luminal side protons: selectively mediates lysosomal proton release from lysosomes, eliciting a proton leak that balances V-ATPase activity to maintain pH homeostasis. Regulation of lumenal pH stability is required for autophagosome-lysosome fusion. Also acts as a potassium channel at higher pH, regulating potassium conductance in endosomes and lysosomes. Constitutes the pore-forming subunit of the lysoK(GF) complex, a complex activated by extracellular growth factors. The lysoK(GF) complex is composed of TMEM175 and AKT (AKT1, AKT2 or AKT3), a major target of growth factor receptors: in the complex, TMEM175 channel is opened by conformational changes by AKT, leading to its activation. The lysoK(GF) complex is required to protect neurons against stress-induced damage. The sequence is that of Endosomal/lysosomal proton channel TMEM175 from Homo sapiens (Human).